The sequence spans 295 residues: Inward rectifier potassium channel Kirbac3.1 (295 aa).

Topologically, residues 1–47 (MTGGMKPPARKPRILNSDGSSNITRLGLEKRGWLDDHYHDLLTVSWP) are cytoplasmic. A helical membrane pass occupies residues 48 to 69 (VFITLITGLYLVTNALFALAYL). The Extracellular segment spans residues 70–82 (ACGDVIENARPGS). The segment at residues 83–95 (FTDAFFFSVQTMA) is an intramembrane region (helical; Pore-forming). Residues 96–100 (TIGYG) carry the Selectivity filter motif. The helical transmembrane segment at 107 to 131 (PLANTLVTLEALCGMLGLAVAASLI) threads the bilayer. Over 132-295 (YARFTRPTAG…DLGKFHEIAQ (164 aa)) the chain is Cytoplasmic.

Belongs to the inward rectifier-type potassium channel (TC 1.A.2.1) family. KCNJ11 subfamily. In terms of assembly, homotetramer.

The protein localises to the membrane. Its function is as follows. Inward rectifier potassium channel that mediates potassium uptake into the cell. Inward rectifier potassium channels are characterized by a greater tendency to allow potassium to flow into the cell rather than out of it. The inward rectification may be achieved by the blockage of outward current by cytoplasmic divalent metal ions and polyamines. Complements an E.coli mutant that is defective in K(+) uptake. This Paramagnetospirillum magnetotacticum (Aquaspirillum magnetotacticum) protein is Inward rectifier potassium channel Kirbac3.1.